The chain runs to 102 residues: uncharacterized protein (102 aa).

A disordered region spans residues 1-43 (MNNAHEENISSVTGFKSTSGSPAIGSSLPGRSGEGRSSSSSSG). Residues 9–21 (ISSVTGFKSTSGS) are compositionally biased toward polar residues. A compositionally biased stretch (low complexity) spans 25-43 (GSSLPGRSGEGRSSSSSSG).

This is an uncharacterized protein from Saccharomyces cerevisiae (strain ATCC 204508 / S288c) (Baker's yeast).